Here is a 164-residue protein sequence, read N- to C-terminus: Crossover junction endodeoxyribonuclease RuvC (164 aa).

Residues D7, E67, and D140 contribute to the active site. Positions 7, 67, and 140 each coordinate Mg(2+).

The protein belongs to the RuvC family. In terms of assembly, homodimer which binds Holliday junction (HJ) DNA. The HJ becomes 2-fold symmetrical on binding to RuvC with unstacked arms; it has a different conformation from HJ DNA in complex with RuvA. In the full resolvosome a probable DNA-RuvA(4)-RuvB(12)-RuvC(2) complex forms which resolves the HJ. It depends on Mg(2+) as a cofactor.

It is found in the cytoplasm. It catalyses the reaction Endonucleolytic cleavage at a junction such as a reciprocal single-stranded crossover between two homologous DNA duplexes (Holliday junction).. In terms of biological role, the RuvA-RuvB-RuvC complex processes Holliday junction (HJ) DNA during genetic recombination and DNA repair. Endonuclease that resolves HJ intermediates. Cleaves cruciform DNA by making single-stranded nicks across the HJ at symmetrical positions within the homologous arms, yielding a 5'-phosphate and a 3'-hydroxyl group; requires a central core of homology in the junction. The consensus cleavage sequence is 5'-(A/T)TT(C/G)-3'. Cleavage occurs on the 3'-side of the TT dinucleotide at the point of strand exchange. HJ branch migration catalyzed by RuvA-RuvB allows RuvC to scan DNA until it finds its consensus sequence, where it cleaves and resolves the cruciform DNA. The sequence is that of Crossover junction endodeoxyribonuclease RuvC from Alkaliphilus oremlandii (strain OhILAs) (Clostridium oremlandii (strain OhILAs)).